The primary structure comprises 379 residues: Mannitol-1-phosphate 5-dehydrogenase (379 aa).

Residue 3 to 14 (ALHFGAGNIGRG) coordinates NAD(+).

Belongs to the mannitol dehydrogenase family.

It catalyses the reaction D-mannitol 1-phosphate + NAD(+) = beta-D-fructose 6-phosphate + NADH + H(+). This is Mannitol-1-phosphate 5-dehydrogenase from Actinobacillus pleuropneumoniae serotype 5b (strain L20).